A 512-amino-acid chain; its full sequence is Matrix metalloproteinase-27 (512 aa).

A signal peptide spans 1–17; sequence MKSFLLLFLLFVTFSSA. Residues 18–98 constitute a propeptide, activation peptide; that stretch reads LPADQKMENE…PRCGVPDVGQ (81 aa). Positions 89-96 match the Cysteine switch motif; the sequence is PRCGVPDV. C91 contributes to the Zn(2+) binding site. The N-linked (GlcNAc...) asparagine glycan is linked to N110. Ca(2+)-binding residues include D121 and D155. Position 165 (H165) interacts with Zn(2+). Positions 173, 174, and 178 each coordinate Ca(2+). H181 contributes to the Zn(2+) binding site. Positions 188 and 192 each coordinate Ca(2+). Zn(2+) is bound at residue H194. Positions 196 and 199 each coordinate Ca(2+). H216 contacts Zn(2+). The active site involves E217. Residues H220 and H226 each coordinate Zn(2+). 4 Hemopexin repeats span residues 276–325, 326–371, 373–421, and 422–465; these read PHAC…WPSL, PADL…GFPR, VKKI…FPGI, and GLRV…WFQC. A disulfide bridge connects residues C279 and C465. Residue D286 coordinates Ca(2+). Positions 377 and 426 each coordinate Ca(2+). Positions 466–512 are required for retention in the endoplasmic reticulum; it reads KEPLNSSLDFHFNQEKAYSGEVETLHHQSLSLLIFGIVHLLNKICSY.

Belongs to the peptidase M10A family. The cofactor is Ca(2+). It depends on Zn(2+) as a cofactor. In terms of processing, N-glycosylated.

The protein localises to the endoplasmic reticulum. Its function is as follows. Matrix metalloproteinases degrade protein components of the extracellular matrix such as fibronectin, laminin, gelatins and/or collagens. This is Matrix metalloproteinase-27 (MMP27) from Tupaia belangeri (Common tree shrew).